A 128-amino-acid chain; its full sequence is Aspartate 1-decarboxylase (128 aa).

Ser-25 serves as the catalytic Schiff-base intermediate with substrate; via pyruvic acid. Ser-25 is subject to Pyruvic acid (Ser). Residue Thr-57 coordinates substrate. The active-site Proton donor is the Tyr-58. Position 73-75 (73-75 (GSA)) interacts with substrate.

It belongs to the PanD family. Heterooctamer of four alpha and four beta subunits. The cofactor is pyruvate. Post-translationally, is synthesized initially as an inactive proenzyme, which is activated by self-cleavage at a specific serine bond to produce a beta-subunit with a hydroxyl group at its C-terminus and an alpha-subunit with a pyruvoyl group at its N-terminus.

It localises to the cytoplasm. It catalyses the reaction L-aspartate + H(+) = beta-alanine + CO2. Its pathway is cofactor biosynthesis; (R)-pantothenate biosynthesis; beta-alanine from L-aspartate: step 1/1. Catalyzes the pyruvoyl-dependent decarboxylation of aspartate to produce beta-alanine. The sequence is that of Aspartate 1-decarboxylase from Burkholderia lata (strain ATCC 17760 / DSM 23089 / LMG 22485 / NCIMB 9086 / R18194 / 383).